The sequence spans 416 residues: Maltoporin (416 aa).

Residues 1–26 (MELTMKKVSVIAAAVAATLAAGSAFA) form the signal peptide.

This sequence belongs to the porin LamB (TC 1.B.3) family. In terms of assembly, homotrimer formed of three 18-stranded antiparallel beta-barrels, containing three independent channels.

It localises to the cell outer membrane. The catalysed reaction is beta-maltose(in) = beta-maltose(out). Its function is as follows. Involved in the transport of maltose and maltodextrins. The sequence is that of Maltoporin from Vibrio cholerae serotype O1 (strain ATCC 39541 / Classical Ogawa 395 / O395).